Consider the following 179-residue polypeptide: Large ribosomal subunit protein uL6 (179 aa).

This sequence belongs to the universal ribosomal protein uL6 family. In terms of assembly, part of the 50S ribosomal subunit.

In terms of biological role, this protein binds to the 23S rRNA, and is important in its secondary structure. It is located near the subunit interface in the base of the L7/L12 stalk, and near the tRNA binding site of the peptidyltransferase center. The polypeptide is Large ribosomal subunit protein uL6 (Chlorobaculum tepidum (strain ATCC 49652 / DSM 12025 / NBRC 103806 / TLS) (Chlorobium tepidum)).